The sequence spans 2894 residues: uncharacterized protein (2894 aa).

Residues 8 to 28 (ISIFVFTILLLSNVSLGLNVS) form a helical membrane-spanning segment. PbH1 repeat units lie at residues 543–567 (EVRW…DISL), 2085–2107 (NYPL…SMLN), 2135–2156 (FGNI…VLYK), 2158–2180 (GNGI…YSKN), 2201–2223 (ISSI…LLEN), 2224–2244 (SSSS…YLKE), 2245–2266 (NYIS…EIVN), 2267–2289 (SSNV…AIFN), 2290–2311 (GENV…LSYG), 2341–2363 (LNNL…FIYS), 2367–2389 (ASNV…YIYG), 2390–2419 (VNAI…KISG), 2422–2444 (TKGV…SLEG), 2455–2477 (VENN…YIGG), 2479–2501 (VENV…LIQE), 2512–2542 (GTNI…TVGA), 2550–2582 (NGYI…EVYG), 2589–2611 (SLEF…LIGA), 2612–2633 (SKDI…TIPN), and 2638–2660 (PYNI…DLDD).

It localises to the membrane. This is an uncharacterized protein from Methanocaldococcus jannaschii (strain ATCC 43067 / DSM 2661 / JAL-1 / JCM 10045 / NBRC 100440) (Methanococcus jannaschii).